A 482-amino-acid polypeptide reads, in one-letter code: Solute carrier family 49 member A3 (482 aa).

The next 12 membrane-spanning stretches (helical) occupy residues Trp41–Phe61, Tyr81–Ile101, Ala109–Val129, Leu150–Phe170, Ile181–Val201, Tyr206–Thr226, Val264–Leu284, Leu296–Cys316, Val330–Phe350, Val355–Gly375, Ser390–Phe410, and Thr437–Phe457.

The protein belongs to the major facilitator superfamily.

It is found in the membrane. The chain is Solute carrier family 49 member A3 (slc49a3) from Xenopus tropicalis (Western clawed frog).